The primary structure comprises 571 residues: Isocitrate dehydrogenase kinase/phosphatase (571 aa).

ATP contacts are provided by residues 318-324 (APGVRGM) and Lys339. Residue Asp374 is part of the active site.

Belongs to the AceK family.

It is found in the cytoplasm. The catalysed reaction is L-seryl-[isocitrate dehydrogenase] + ATP = O-phospho-L-seryl-[isocitrate dehydrogenase] + ADP + H(+). Functionally, bifunctional enzyme which can phosphorylate or dephosphorylate isocitrate dehydrogenase (IDH) on a specific serine residue. This is a regulatory mechanism which enables bacteria to bypass the Krebs cycle via the glyoxylate shunt in response to the source of carbon. When bacteria are grown on glucose, IDH is fully active and unphosphorylated, but when grown on acetate or ethanol, the activity of IDH declines drastically concomitant with its phosphorylation. The polypeptide is Isocitrate dehydrogenase kinase/phosphatase (Pseudomonas entomophila (strain L48)).